Reading from the N-terminus, the 389-residue chain is Phosphopentomutase (389 aa).

Mn(2+) is bound by residues Asp-10, Asp-282, His-287, Asp-323, His-324, and His-335.

It belongs to the phosphopentomutase family. Mn(2+) is required as a cofactor.

It is found in the cytoplasm. The catalysed reaction is 2-deoxy-alpha-D-ribose 1-phosphate = 2-deoxy-D-ribose 5-phosphate. The enzyme catalyses alpha-D-ribose 1-phosphate = D-ribose 5-phosphate. The protein operates within carbohydrate degradation; 2-deoxy-D-ribose 1-phosphate degradation; D-glyceraldehyde 3-phosphate and acetaldehyde from 2-deoxy-alpha-D-ribose 1-phosphate: step 1/2. In terms of biological role, isomerase that catalyzes the conversion of deoxy-ribose 1-phosphate (dRib-1-P) and ribose 1-phosphate (Rib-1-P) to deoxy-ribose 5-phosphate (dRib-5-P) and ribose 5-phosphate (Rib-5-P), respectively. The protein is Phosphopentomutase of Clostridium kluyveri (strain NBRC 12016).